A 328-amino-acid polypeptide reads, in one-letter code: N-acyl-aromatic-L-amino acid amidohydrolase (carboxylate-forming) A (328 aa).

Zn(2+) contacts are provided by H30 and E33. Substrate is bound by residues R74 and 81-82; that span reads NR. H127 contacts Zn(2+). The substrate site is built by E189 and Y300.

The protein belongs to the AspA/AstE family. Aspartoacylase subfamily. In terms of assembly, homotetramer. Zn(2+) is required as a cofactor.

Its subcellular location is the apical cell membrane. It is found in the cytoplasm. It catalyses the reaction an N-acyl-aromatic L-alpha-amino acid + H2O = an aromatic L-alpha-amino acid + a carboxylate. The catalysed reaction is an N-acetyl-L-cysteine-S-conjugate + H2O = an S-substituted L-cysteine + acetate. In terms of biological role, plays an important role in deacetylating mercapturic acids in kidney proximal tubules. In Danio rerio (Zebrafish), this protein is N-acyl-aromatic-L-amino acid amidohydrolase (carboxylate-forming) A (acy3.1).